The sequence spans 169 residues: MAESSNKPFRGPVRANDRKANRRGAARLAAVQALYQMDIAGAGINDVLAEFESHWLGSEVEGEQYLPAEAAFFRDIVSGVVRDQTKIDPVLDTALERGWPLQRIEAILRAVLRAGAYELERRKDVPAKVVVSEYVDIAHAFVERDETGMVNAVLEQLARQYRADEMGPK.

The segment at 1 to 20 is disordered; sequence MAESSNKPFRGPVRANDRKA.

The protein belongs to the NusB family.

Functionally, involved in transcription antitermination. Required for transcription of ribosomal RNA (rRNA) genes. Binds specifically to the boxA antiterminator sequence of the ribosomal RNA (rrn) operons. The polypeptide is Transcription antitermination protein NusB (Bradyrhizobium sp. (strain BTAi1 / ATCC BAA-1182)).